Here is a 378-residue protein sequence, read N- to C-terminus: Glutamate 5-kinase (378 aa).

Position 15 (K15) interacts with ATP. 3 residues coordinate substrate: S56, D143, and N155. 175-176 is a binding site for ATP; sequence SD. One can recognise a PUA domain in the interval 281–358; that stretch reads KGTLTIDAGA…PDVAVILGIS (78 aa).

The protein belongs to the glutamate 5-kinase family.

It localises to the cytoplasm. The catalysed reaction is L-glutamate + ATP = L-glutamyl 5-phosphate + ADP. Its pathway is amino-acid biosynthesis; L-proline biosynthesis; L-glutamate 5-semialdehyde from L-glutamate: step 1/2. In terms of biological role, catalyzes the transfer of a phosphate group to glutamate to form L-glutamate 5-phosphate. The polypeptide is Glutamate 5-kinase (Bradyrhizobium sp. (strain BTAi1 / ATCC BAA-1182)).